Consider the following 843-residue polypeptide: Glycogen phosphorylase, brain form (843 aa).

Alanine 2 bears the N-acetylalanine mark. Residue serine 15 is modified to Phosphoserine; by PHK; in form phosphorylase A. Aspartate 43, tyrosine 197, and arginine 310 together coordinate AMP. Tyrosine 197 carries the post-translational modification Phosphotyrosine. Tyrosine 473 carries the phosphotyrosine modification. Residue lysine 569 coordinates pyridoxal 5'-phosphate. Residues 677–678 are pyridoxal 5'-phosphate; it reads TG. Lysine 681 carries the post-translational modification N6-(pyridoxal phosphate)lysine.

This sequence belongs to the glycogen phosphorylase family. As to quaternary structure, homodimer. Dimers associate into a tetramer to form the enzymatically active phosphorylase A. It depends on pyridoxal 5'-phosphate as a cofactor. Post-translationally, phosphorylation of Ser-15 converts phosphorylase B (unphosphorylated) to phosphorylase A.

It carries out the reaction [(1-&gt;4)-alpha-D-glucosyl](n) + phosphate = [(1-&gt;4)-alpha-D-glucosyl](n-1) + alpha-D-glucose 1-phosphate. With respect to regulation, activity of phosphorylase is controlled both by allosteric means (through the non-covalent binding of metabolites) and by covalent modification. Thus AMP allosterically activates, whereas ATP, ADP, and glucose-6-phosphate allosterically inhibit, phosphorylase B. Glycogen phosphorylase that regulates glycogen mobilization. Phosphorylase is an important allosteric enzyme in carbohydrate metabolism. Enzymes from different sources differ in their regulatory mechanisms and in their natural substrates. However, all known phosphorylases share catalytic and structural properties. The polypeptide is Glycogen phosphorylase, brain form (PYGB) (Ovis aries (Sheep)).